Consider the following 340-residue polypeptide: Transcription initiation factor IIB (340 aa).

The TFIIB-type zinc finger occupies 16–49 (VKMICSECREDPPNLVEEFSSGDTVCGSCGLVLG). The Zn(2+) site is built by Cys20, Cys23, Cys41, and Cys44. 2 consecutive repeat copies span residues 128 to 204 (MCDA…TLQR) and 239 to 315 (FCNR…LLHA).

Belongs to the TFIIB family. As to quaternary structure, associates with TFIID-IIA (DA complex) to form TFIID-IIA-IIB (DAB-complex) which is then recognized by polymerase II.

The protein resides in the nucleus. Functionally, general factor that plays a major role in the activation of eukaryotic genes transcribed by RNA polymerase II. This chain is Transcription initiation factor IIB (sua7), found in Schizosaccharomyces pombe (strain 972 / ATCC 24843) (Fission yeast).